A 189-amino-acid chain; its full sequence is Protein GrpE (189 aa).

The interval 1 to 31 (MSKKHMKGNGGEVPENSEMSGSEELVAVEPG) is disordered.

The protein belongs to the GrpE family. As to quaternary structure, homodimer.

It is found in the cytoplasm. Participates actively in the response to hyperosmotic and heat shock by preventing the aggregation of stress-denatured proteins, in association with DnaK and GrpE. It is the nucleotide exchange factor for DnaK and may function as a thermosensor. Unfolded proteins bind initially to DnaJ; upon interaction with the DnaJ-bound protein, DnaK hydrolyzes its bound ATP, resulting in the formation of a stable complex. GrpE releases ADP from DnaK; ATP binding to DnaK triggers the release of the substrate protein, thus completing the reaction cycle. Several rounds of ATP-dependent interactions between DnaJ, DnaK and GrpE are required for fully efficient folding. This chain is Protein GrpE, found in Syntrophobacter fumaroxidans (strain DSM 10017 / MPOB).